A 458-amino-acid polypeptide reads, in one-letter code: ATP synthase subunit beta (458 aa).

148 to 155 (GGAGVGKT) contributes to the ATP binding site.

This sequence belongs to the ATPase alpha/beta chains family. F-type ATPases have 2 components, CF(1) - the catalytic core - and CF(0) - the membrane proton channel. CF(1) has five subunits: alpha(3), beta(3), gamma(1), delta(1), epsilon(1). CF(0) has three main subunits: a(1), b(2) and c(9-12). The alpha and beta chains form an alternating ring which encloses part of the gamma chain. CF(1) is attached to CF(0) by a central stalk formed by the gamma and epsilon chains, while a peripheral stalk is formed by the delta and b chains.

Its subcellular location is the cell inner membrane. It carries out the reaction ATP + H2O + 4 H(+)(in) = ADP + phosphate + 5 H(+)(out). Its function is as follows. Produces ATP from ADP in the presence of a proton gradient across the membrane. The catalytic sites are hosted primarily by the beta subunits. The protein is ATP synthase subunit beta of Pseudomonas aeruginosa (strain LESB58).